We begin with the raw amino-acid sequence, 438 residues long: Ribosomal protein uS12 methylthiotransferase RimO (438 aa).

Residues 5–115 enclose the MTTase N-terminal domain; that stretch reads PRVGFVSLGC…VMSAVHTHLP (111 aa). [4Fe-4S] cluster contacts are provided by cysteine 14, cysteine 50, cysteine 79, cysteine 146, cysteine 150, and cysteine 153. The Radical SAM core domain occupies 132-369; sequence LTPKHYAYLK…MAVQAEISAR (238 aa). The 67-residue stretch at 372-438 folds into the TRAM domain; it reads ERRVGQTLQV…SEHDLWGERR (67 aa).

Belongs to the methylthiotransferase family. RimO subfamily. [4Fe-4S] cluster serves as cofactor.

The protein resides in the cytoplasm. The catalysed reaction is L-aspartate(89)-[ribosomal protein uS12]-hydrogen + (sulfur carrier)-SH + AH2 + 2 S-adenosyl-L-methionine = 3-methylsulfanyl-L-aspartate(89)-[ribosomal protein uS12]-hydrogen + (sulfur carrier)-H + 5'-deoxyadenosine + L-methionine + A + S-adenosyl-L-homocysteine + 2 H(+). In terms of biological role, catalyzes the methylthiolation of an aspartic acid residue of ribosomal protein uS12. This chain is Ribosomal protein uS12 methylthiotransferase RimO, found in Chromobacterium violaceum (strain ATCC 12472 / DSM 30191 / JCM 1249 / CCUG 213 / NBRC 12614 / NCIMB 9131 / NCTC 9757 / MK).